Here is a 144-residue protein sequence, read N- to C-terminus: MAKKIVGFVKLQVPAGKANPSPPIGPALGQRGLNIMEFCKAFNAQTQGVEPGLPLPVVITAYADKSFTFIIKTPPAITLIKKAIKLDKGSATPHSAKVGKITRAQLEEIAKAKMKDLTAADLDAAVRTIAGSARSMGVTVEGVV.

The protein belongs to the universal ribosomal protein uL11 family. Part of the ribosomal stalk of the 50S ribosomal subunit. Interacts with L10 and the large rRNA to form the base of the stalk. L10 forms an elongated spine to which L12 dimers bind in a sequential fashion forming a multimeric L10(L12)X complex. Post-translationally, one or more lysine residues are methylated.

Forms part of the ribosomal stalk which helps the ribosome interact with GTP-bound translation factors. The protein is Large ribosomal subunit protein uL11 of Polaromonas naphthalenivorans (strain CJ2).